Here is a 112-residue protein sequence, read N- to C-terminus: Large ribosomal subunit protein bL20c (112 aa).

Belongs to the bacterial ribosomal protein bL20 family.

Its subcellular location is the plastid. The protein resides in the chloroplast. Its function is as follows. Binds directly to 23S ribosomal RNA and is necessary for the in vitro assembly process of the 50S ribosomal subunit. It is not involved in the protein synthesizing functions of that subunit. The chain is Large ribosomal subunit protein bL20c (rpl20) from Anthoceros angustus (Hornwort).